The primary structure comprises 674 residues: PTS system glucose-specific EIIBCA component (674 aa).

Residues 1–89 (MASKLTTTSQ…LKLDGMKHFA (89 aa)) enclose the PTS EIIB type-1 domain. Cys-28 acts as the Phosphocysteine intermediate; for EIIB activity in catalysis. One can recognise a PTS EIIC type-1 domain in the interval 117–476 (EFLSDTFRPI…DAERDEAKAQ (360 aa)). Transmembrane regions (helical) follow at residues 126–146 (ILWALLGASLIITLLVLADTF), 162–182 (YVFLHSMWRSVFYFLPIMVGA), 193–213 (WIGAAIPAALLTPEFLALGSA), 225–245 (VLNDYSGQVFPPLIAAIGLYW), 260–280 (MVFVPFFSLLIMIPATAFLLG), 303–323 (FILSIVIPLLYPFLVPLGLHW), 344–364 (PMGAWNFACFGLVTGVFLIAL), 376–396 (LGGMLAGLLGGISEPSLYGVL), 409–429 (GCLVGGIVMGIFDIKAYAFVF), and 442–462 (LGYTVGIAAAFFTSMLLVLFF). One can recognise a PTS EIIA type-1 domain in the interval 542 to 646 (DPIFAAGKLG…PLITPVVVSN (105 aa)). His-594 acts as the Tele-phosphohistidine intermediate; for EIIA activity in catalysis.

It localises to the cell membrane. The catalysed reaction is N(pros)-phospho-L-histidyl-[protein] + D-glucose(out) = D-glucose 6-phosphate(in) + L-histidyl-[protein]. The phosphoenolpyruvate-dependent sugar phosphotransferase system (sugar PTS), a major carbohydrate active transport system, catalyzes the phosphorylation of incoming sugar substrates concomitantly with their translocation across the cell membrane. This system is involved in glucose transport. This chain is PTS system glucose-specific EIIBCA component (ptsG), found in Corynebacterium glutamicum (Brevibacterium saccharolyticum).